The following is a 214-amino-acid chain: Ribonuclease HII (214 aa).

The 189-residue stretch at Glu26–Arg214 folds into the RNase H type-2 domain. Positions 32, 33, and 124 each coordinate a divalent metal cation.

This sequence belongs to the RNase HII family. The cofactor is Mn(2+). It depends on Mg(2+) as a cofactor.

It is found in the cytoplasm. The catalysed reaction is Endonucleolytic cleavage to 5'-phosphomonoester.. Its function is as follows. Endonuclease that specifically degrades the RNA of RNA-DNA hybrids. This is Ribonuclease HII from Burkholderia thailandensis (strain ATCC 700388 / DSM 13276 / CCUG 48851 / CIP 106301 / E264).